Here is a 420-residue protein sequence, read N- to C-terminus: L-rhamnose isomerase (420 aa).

His-264, Asp-296, and Asp-298 together coordinate Mn(2+).

It belongs to the rhamnose isomerase family. Requires Mn(2+) as cofactor.

It is found in the cytoplasm. It catalyses the reaction L-rhamnopyranose = L-rhamnulose. It participates in carbohydrate degradation; L-rhamnose degradation; glycerone phosphate from L-rhamnose: step 1/3. In terms of biological role, catalyzes the interconversion of L-rhamnose and L-rhamnulose. The chain is L-rhamnose isomerase from Listeria monocytogenes serotype 4b (strain F2365).